A 343-amino-acid chain; its full sequence is Cytoplasmic tRNA 2-thiolation protein 1 (343 aa).

It belongs to the TtcA family. CTU1/NCS6/ATPBD3 subfamily.

The protein localises to the cytoplasm. The protein operates within tRNA modification; 5-methoxycarbonylmethyl-2-thiouridine-tRNA biosynthesis. In terms of biological role, plays a central role in 2-thiolation of mcm(5)S(2)U at tRNA wobble positions of tRNA(Lys), tRNA(Glu) and tRNA(Gln). Directly binds tRNAs and probably acts by catalyzing adenylation of tRNAs, an intermediate required for 2-thiolation. It is unclear whether it acts as a sulfurtransferase that transfers sulfur from thiocarboxylated URM1 onto the uridine of tRNAs at wobble position. The polypeptide is Cytoplasmic tRNA 2-thiolation protein 1 (Drosophila willistoni (Fruit fly)).